The chain runs to 171 residues: MALLTVLCYPDSRLHKVAKPVAQVDARIKKIVADMADTMYEAPGVGLAATQVDIHERIVVIDVSDEQNELMVFINPEIVWTSSETKSWREGCLSVPEFYDEVERPAEIRVKALDIDGKEFEIEADGSLAVCLQHELDHLQGKVFVEYLSIFKRTRISQKMKKRAKELIGQR.

Fe cation contacts are provided by C92 and H134. E135 is an active-site residue. H138 provides a ligand contact to Fe cation.

The protein belongs to the polypeptide deformylase family. It depends on Fe(2+) as a cofactor.

It catalyses the reaction N-terminal N-formyl-L-methionyl-[peptide] + H2O = N-terminal L-methionyl-[peptide] + formate. In terms of biological role, removes the formyl group from the N-terminal Met of newly synthesized proteins. Requires at least a dipeptide for an efficient rate of reaction. N-terminal L-methionine is a prerequisite for activity but the enzyme has broad specificity at other positions. In Polynucleobacter necessarius subsp. necessarius (strain STIR1), this protein is Peptide deformylase.